The sequence spans 464 residues: Tyrosine aminotransferase (464 aa).

Lys-284 is subject to N6-(pyridoxal phosphate)lysine.

This sequence belongs to the class-I pyridoxal-phosphate-dependent aminotransferase family. In terms of assembly, homodimer. Pyridoxal 5'-phosphate serves as cofactor. As to expression, expressed in the muscle. Expressed in the hypodermis and intestine.

The catalysed reaction is L-tyrosine + 2-oxoglutarate = 3-(4-hydroxyphenyl)pyruvate + L-glutamate. The enzyme catalyses 3-hydroxy-L-phenylalanine + 2-oxoglutarate = 3-(3-hydroxyphenyl)pyruvate + L-glutamate. It functions in the pathway amino-acid degradation; L-phenylalanine degradation; acetoacetate and fumarate from L-phenylalanine: step 2/6. Functionally, transaminase involved in tyrosine breakdown. Converts tyrosine to p-hydroxyphenylpyruvate. Has no transaminase activity towards phenylalanine. Plays protective role against oxidative stress, metabolizing meta-tyrosine and negatively regulating its accumulation. Plays a role in modulating the daf-2/insulin receptor-like transduction pathway through regulating tyrosine levels. Negatively regulates dauer formation. Plays a role in longevity. The protein is Tyrosine aminotransferase of Caenorhabditis elegans.